The primary structure comprises 476 residues: tRNA(Ile)-lysidine synthase (476 aa).

ATP is bound at residue 30-35 (SGGPDS).

It belongs to the tRNA(Ile)-lysidine synthase family.

It localises to the cytoplasm. The enzyme catalyses cytidine(34) in tRNA(Ile2) + L-lysine + ATP = lysidine(34) in tRNA(Ile2) + AMP + diphosphate + H(+). Its function is as follows. Ligates lysine onto the cytidine present at position 34 of the AUA codon-specific tRNA(Ile) that contains the anticodon CAU, in an ATP-dependent manner. Cytidine is converted to lysidine, thus changing the amino acid specificity of the tRNA from methionine to isoleucine. This Bacillus cereus (strain ATCC 14579 / DSM 31 / CCUG 7414 / JCM 2152 / NBRC 15305 / NCIMB 9373 / NCTC 2599 / NRRL B-3711) protein is tRNA(Ile)-lysidine synthase.